We begin with the raw amino-acid sequence, 257 residues long: Ribonuclease HII (257 aa).

An RNase H type-2 domain is found at 72-257 (TYIAGIDEVG…FAPIKDMIQK (186 aa)). The a divalent metal cation site is built by Asp78, Glu79, and Asp170.

Belongs to the RNase HII family. Mn(2+) serves as cofactor. Mg(2+) is required as a cofactor.

It localises to the cytoplasm. The catalysed reaction is Endonucleolytic cleavage to 5'-phosphomonoester.. Endonuclease that specifically degrades the RNA of RNA-DNA hybrids. In Bacillus cereus (strain ATCC 14579 / DSM 31 / CCUG 7414 / JCM 2152 / NBRC 15305 / NCIMB 9373 / NCTC 2599 / NRRL B-3711), this protein is Ribonuclease HII.